The following is a 414-amino-acid chain: Proton/glutamate-aspartate symporter (414 aa).

Residues 1–3 (MKK) lie on the Cytoplasmic side of the membrane. The chain crosses the membrane as a helical span at residues 4-24 (LIAFQILIALAVGAVIGHFFP). The Extracellular portion of the chain corresponds to 25–42 (DFGMALRPVGDGFIRLIK). The chain crosses the membrane as a helical span at residues 43-63 (MIVVPIVFSTIVIGAAGSGSM). Residues 64-73 (KKMGSLGIKT) lie on the Cytoplasmic side of the membrane. A helical transmembrane segment spans residues 74–94 (IIWFEVITTLVLGLGLLLANV). The Extracellular portion of the chain corresponds to 95–144 (LKPGVGLDLSHLAKKDIHELSGYTDKVVDFKQMILDIIPTNIIDVMARND). The helical transmembrane segment at 145–165 (LLAVIFFAILFGVAAAGIGKA) threads the bilayer. Over 166–182 (SEPVMKFFESTAQIMFK) the chain is Cytoplasmic. The chain crosses the membrane as a helical span at residues 183–203 (LTQIVMVTAPIGVLALMAASV). The Extracellular segment spans residues 204-219 (GQYGIELLLPMFKLVG). The chain crosses the membrane as a helical span at residues 220–240 (TVFLGLFLILFVLFPLVGLIF). Gln-241 is a topological domain (cytoplasmic). The helical transmembrane segment at 242 to 262 (IKYFEVLKMIWDLFLIAFSTT) threads the bilayer. The Extracellular segment spans residues 263-300 (STETILPQLMDRMEKYGCPKRVVSFVVPSGLSLNCDGS). Residues 301-321 (SLYLSVSCIFLAQAFQVDMTL) traverse the membrane as a helical segment. Topologically, residues 322-324 (SQQ) are cytoplasmic. 2 consecutive transmembrane segments (helical) span residues 325–345 (LLMM…PSGS) and 346–366 (LVVL…VAII). At 367–414 (AGVDRVMDMARTGVNVPGHAIACIVVSKWEKAFRQKEWVSANSQTESI) the chain is on the cytoplasmic side.

The protein belongs to the dicarboxylate/amino acid:cation symporter (DAACS) (TC 2.A.23) family.

It localises to the cell membrane. With respect to regulation, glutamate uptake is inhibited by beta-hydroxyaspartate and cysteic acid. Catalyzes the proton-dependent, binding-protein-independent transport of glutamate and aspartate. This chain is Proton/glutamate-aspartate symporter, found in Bacillus subtilis (strain 168).